The following is an 87-amino-acid chain: Small ribosomal subunit protein bS18B (87 aa).

This sequence belongs to the bacterial ribosomal protein bS18 family. In terms of assembly, part of the 30S ribosomal subunit. Forms a tight heterodimer with protein bS6.

Binds as a heterodimer with protein bS6 to the central domain of the 16S rRNA, where it helps stabilize the platform of the 30S subunit. The protein is Small ribosomal subunit protein bS18B of Mycobacterium marinum (strain ATCC BAA-535 / M).